The sequence spans 297 residues: Homoserine kinase (297 aa).

82–92 lines the ATP pocket; sequence PLTRGLGSSAS.

The protein belongs to the GHMP kinase family. Homoserine kinase subfamily.

It localises to the cytoplasm. It carries out the reaction L-homoserine + ATP = O-phospho-L-homoserine + ADP + H(+). It functions in the pathway amino-acid biosynthesis; L-threonine biosynthesis; L-threonine from L-aspartate: step 4/5. Catalyzes the ATP-dependent phosphorylation of L-homoserine to L-homoserine phosphate. This chain is Homoserine kinase, found in Bacillus anthracis (strain CDC 684 / NRRL 3495).